The sequence spans 354 residues: Serine/threonine-protein kinase ppk34 (354 aa).

The Protein kinase domain occupies 40-331 (YRLKNMLGYG…IEELLRDPFL (292 aa)). ATP is bound by residues 46-54 (LGYGACSTV) and Lys-69. The active-site Proton acceptor is Asp-200.

Belongs to the protein kinase superfamily. Ser/Thr protein kinase family.

Its subcellular location is the cytoplasm. It localises to the nucleus. It carries out the reaction L-seryl-[protein] + ATP = O-phospho-L-seryl-[protein] + ADP + H(+). It catalyses the reaction L-threonyl-[protein] + ATP = O-phospho-L-threonyl-[protein] + ADP + H(+). The sequence is that of Serine/threonine-protein kinase ppk34 (ppk34) from Schizosaccharomyces pombe (strain 972 / ATCC 24843) (Fission yeast).